Reading from the N-terminus, the 181-residue chain is NADH-quinone oxidoreductase subunit I (181 aa).

4Fe-4S ferredoxin-type domains lie at 51–80 (TRNS…LKKS) and 90–119 (KSFQ…LTPD). The [4Fe-4S] cluster site is built by Cys60, Cys63, Cys66, Cys70, Cys99, Cys102, Cys105, and Cys109.

This sequence belongs to the complex I 23 kDa subunit family. In terms of assembly, NDH-1 is composed of 13 different subunits. Subunits NuoA, H, J, K, L, M, N constitute the membrane sector of the complex. The cofactor is [4Fe-4S] cluster.

The protein resides in the cell membrane. It catalyses the reaction a quinone + NADH + 5 H(+)(in) = a quinol + NAD(+) + 4 H(+)(out). NDH-1 shuttles electrons from NADH, via FMN and iron-sulfur (Fe-S) centers, to quinones in the respiratory chain. The immediate electron acceptor for the enzyme in this species is believed to be ubiquinone. Couples the redox reaction to proton translocation (for every two electrons transferred, four hydrogen ions are translocated across the cytoplasmic membrane), and thus conserves the redox energy in a proton gradient. The sequence is that of NADH-quinone oxidoreductase subunit I from Buchnera aphidicola subsp. Cinara cedri (strain Cc).